The sequence spans 410 residues: Trifunctional NAD biosynthesis/regulator protein NadR (410 aa).

In terms of domain architecture, HTH cro/C1-type spans 7–62 (LKTAIKQQGCTLQQVADASGMTKGYLSQLLNAKIKSPSAQKLEALHRFLGLEFPRR). A DNA-binding region (H-T-H motif) is located at residues 18-37 (LQQVADASGMTKGYLSQLLN). Residues 63–229 (QKNIGVVFGK…EYIPTEVKPF (167 aa)) are nicotinamide mononucleotide adenylyltransferase. Residues 70–73 (FGKF), H77, R104, 144–157 (EEGMEPYPHGWDVW), 177–179 (TSE), 204–206 (MNI), 259–261 (SAW), and 294–297 (YIDF) each bind NAD(+). The ribosylnicotinamide kinase stretch occupies residues 230-410 (FVRTVAILGG…LVKEMMGEQG (181 aa)).

The protein in the central section; belongs to the bacterial NMN adenylyltransferase family. It in the C-terminal section; belongs to the bacterial RNK family. In terms of assembly, homotetramer.

The protein resides in the cell membrane. The protein localises to the cytoplasm. The enzyme catalyses beta-nicotinamide D-ribonucleotide + ATP + H(+) = diphosphate + NAD(+). The catalysed reaction is beta-nicotinamide D-riboside + ATP = beta-nicotinamide D-ribonucleotide + ADP + H(+). Its pathway is cofactor biosynthesis; NAD(+) biosynthesis [regulation]. It functions in the pathway cofactor biosynthesis; NAD(+) biosynthesis; NAD(+) from nicotinamide D-ribonucleotide: step 1/1. With respect to regulation, feed-back regulated by NAD. A high level of NAD causes NadR to lose enzymatic activity and repress several NAD synthetic genes; conversely, a low NAD level activates the assimilatory enzymatic activities and leads to derepression of biosynthetic genes. Functionally, this enzyme has three activities: DNA binding, nicotinamide mononucleotide (NMN) adenylyltransferase and ribosylnicotinamide (RN) kinase. The DNA-binding domain binds to the nadB operator sequence in an NAD- and ATP-dependent manner. As NAD levels increase within the cell, the affinity of NadR for the nadB operator regions of nadA, nadB, and pncB increases, repressing the transcription of these genes. The RN kinase activity catalyzes the phosphorylation of RN to form nicotinamide ribonucleotide. The NMN adenylyltransferase activity catalyzes the transfer of the AMP moiety of ATP to nicotinamide ribonucleotide to form NAD(+). The NMN adenylyltransferase domain also functions as the NAD and ATP sensor. The chain is Trifunctional NAD biosynthesis/regulator protein NadR (nadR) from Salmonella typhimurium (strain LT2 / SGSC1412 / ATCC 700720).